Here is a 652-residue protein sequence, read N- to C-terminus: DNA ligase (652 aa).

NAD(+) is bound by residues 29–33 (DSEYD), 78–79 (SL), and glutamate 107. Lysine 109 (N6-AMP-lysine intermediate) is an active-site residue. Residues arginine 130, glutamate 164, lysine 278, and lysine 302 each contribute to the NAD(+) site. Residues cysteine 395, cysteine 398, cysteine 413, and cysteine 418 each coordinate Zn(2+). Positions 577-652 (VADAALSGLT…VRDEAWLESL (76 aa)) constitute a BRCT domain.

The protein belongs to the NAD-dependent DNA ligase family. LigA subfamily. Requires Mg(2+) as cofactor. Mn(2+) serves as cofactor.

The catalysed reaction is NAD(+) + (deoxyribonucleotide)n-3'-hydroxyl + 5'-phospho-(deoxyribonucleotide)m = (deoxyribonucleotide)n+m + AMP + beta-nicotinamide D-nucleotide.. In terms of biological role, DNA ligase that catalyzes the formation of phosphodiester linkages between 5'-phosphoryl and 3'-hydroxyl groups in double-stranded DNA using NAD as a coenzyme and as the energy source for the reaction. It is essential for DNA replication and repair of damaged DNA. This Streptococcus pneumoniae serotype 2 (strain D39 / NCTC 7466) protein is DNA ligase.